The following is a 915-amino-acid chain: MFSTCSDGRPFQSFSTNLEDFDSIRSVLLYSDLEPEWLDDVQKNGQLFYLELSDGEEEALLAQVSANHSAATNHVRFSEKEAEIITDNAKRQANSSNKSEAKLKKLTKILRRKRRPSQRKAEGKDSSQRPASILKNQAGQRPGVVVQQQRLKDVCVYLNPKRLSSVSSSSADRGGLLEALLGVVHRPGGNTGKRGGKLIIHGLIPHSPASKCAEILIGDALVAVDDVEVTSENIERVLSCIPGPMQVRLTLETVCPAGVSPESKVSASPQVSQLVRLLWGEDTIELQMSIADVPHIAMFLSLRLDSETQQDEQEIVYQYPQSEASAQLKAVRGIFLTLCDMLENVTGGQIISSSLWLQQQLVHVGYWKEESNLLVIAVPASRVPLLYLQTVIEGVVRTLKVMYGSLDRGFSDVENAPRLDHFFCLFFQQLIQPSRLIHSSRTPDLYGSLFLDGLPAVRWLTLPPDIKVEVDTVLSDFESSDFGDMSEDFYGMRRLYVILGSCLFYKGYLIANHLPKEDLLDVCLYCQHYCLLPLASEQRVAQLVVWREVFPQRRETRNSTAHPGYCQPHARHFLLIVGLRHFMQCVLLEAGGCASSAVGRPTPDSVYVDQVKATLLQLESLDAGIEERLSAPPTPCLSCADWFLPAGGRSQQDTIGSSPILNRLTAAIKPPSPGGIGRSLFGEAGTVGIRGRRASPQRSQSDSGSEGHADGTPASVARRDSLGSGGSDGSLGSAGFLKMPRLKHPNPFYLGSLRKSLSERETEEMQNVLQVTAGVENTLFHYVLMESVQGIFIAPTHTEIRHLSGSIHPQLIHNFQHCCLSIRQAFQQSLPTRDRRGPERQSTAGLGPVKEHGVLFQCKPQNWTDQKKPAPTMTYWVIGRMLLEPVPQEFYVCFHDSVAEVPVEMAFRLSFGLAV.

The segment at 88-144 (NAKRQANSSNKSEAKLKKLTKILRRKRRPSQRKAEGKDSSQRPASILKNQAGQRPGV) is disordered. The span at 104–118 (KKLTKILRRKRRPSQ) shows a compositional bias: basic residues. The segment covering 128-139 (QRPASILKNQAG) has biased composition (polar residues). A PDZ domain is found at 165 to 253 (SVSSSSADRG…PMQVRLTLET (89 aa)). The segment at 688–738 (GIRGRRASPQRSQSDSGSEGHADGTPASVARRDSLGSGGSDGSLGSAGFLK) is disordered.

Belongs to the inturned family.

The protein localises to the cytoplasm. Its subcellular location is the cell surface. It is found in the cytoskeleton. It localises to the cilium basal body. Its function is as follows. Plays a key role in ciliogenesis and embryonic development. Regulator of cilia formation by controlling the organization of the apical actin cytoskeleton and the positioning of the basal bodies at the apical cell surface, which in turn is essential for the normal orientation of elongating ciliary microtubules. Plays a key role in definition of cell polarity via its role in ciliogenesis but not via conversion extension. Has an indirect effect on hedgehog signaling. This Danio rerio (Zebrafish) protein is Protein inturned (intu).